We begin with the raw amino-acid sequence, 591 residues long: Maintenance of mitochondrial morphology protein 1 (591 aa).

Over 1–83 (MGFNIPWNGT…AQPSLSFTQG (83 aa)) the chain is Lumenal. A helical transmembrane segment spans residues 84 to 104 (LLVGQLSVVLLIGAFIKFFIF). The Cytoplasmic segment spans residues 105 to 591 (GEAPPPPSRS…GSMPDSVAVT (487 aa)). Disordered regions lie at residues 138 to 159 (PRTL…SSST), 170 to 189 (YSAT…VHHS), 334 to 398 (PGTS…KHAH), and 479 to 591 (EAEA…VAVT). 2 stretches are compositionally biased toward polar residues: residues 146–159 (STSN…SSST) and 170–179 (YSATPTNPTS). Residues 180–189 (KHGRSRVHHS) are compositionally biased toward basic residues. The region spanning 192–462 (QPESLDWFNV…EPRVQVVGLP (271 aa)) is the SMP-LTD domain. The span at 336 to 371 (TSDQTMGPSASPPNQSTSTETASINDQTSEGQSTQR) shows a compositional bias: polar residues. A compositionally biased stretch (low complexity) spans 379–389 (PTNSTPTAATA). Gly residues-rich tracts occupy residues 496–525 (TAGG…GMGY) and 536–550 (GDGG…GAGG). A compositionally biased stretch (basic and acidic residues) spans 563-578 (GGDDGEGPGRRSDERF).

It belongs to the MMM1 family. As to quaternary structure, homodimer. Component of the ER-mitochondria encounter structure (ERMES) or MDM complex, composed of MMM1, MDM10, MDM12 and MDM34. An MMM1 homodimer associates with one molecule of MDM12 on each side in a pairwise head-to-tail manner, and the SMP-LTD domains of MMM1 and MDM12 generate a continuous hydrophobic tunnel for phospholipid trafficking.

Its subcellular location is the endoplasmic reticulum membrane. Component of the ERMES/MDM complex, which serves as a molecular tether to connect the endoplasmic reticulum (ER) and mitochondria. Components of this complex are involved in the control of mitochondrial shape and protein biogenesis, and function in nonvesicular lipid trafficking between the ER and mitochondria. The MDM12-MMM1 subcomplex functions in the major beta-barrel assembly pathway that is responsible for biogenesis of all outer membrane beta-barrel proteins, and acts in a late step after the SAM complex. The MDM10-MDM12-MMM1 subcomplex further acts in the TOM40-specific pathway after the action of the MDM12-MMM1 complex. Essential for establishing and maintaining the structure of mitochondria and maintenance of mtDNA nucleoids. The protein is Maintenance of mitochondrial morphology protein 1 of Ajellomyces capsulatus (strain G186AR / H82 / ATCC MYA-2454 / RMSCC 2432) (Darling's disease fungus).